A 609-amino-acid chain; its full sequence is Frizzled and smoothened-like protein E (609 aa).

Residues 1-20 (MEMIRIFLIYLILKIIIING) form the signal peptide. Residues 21-259 (ENNEYSKGYG…QWKRVYDMAK (239 aa)) are Extracellular-facing. Positions 35-192 (FPGSKCLNYV…GLYKVPCIDP (158 aa)) constitute an FZ domain. Disulfide bonds link C40–C118, C53–C111, C100–C149, and C138–C189. N-linked (GlcNAc...) asparagine glycans are attached at residues N75, N130, N172, N198, N217, and N245. A helical transmembrane segment spans residues 260 to 280 (TLSSISFICACYNILTFGILN). The Cytoplasmic segment spans residues 281-288 (RKRKSKYN). The helical transmembrane segment at 289-309 (ICITLMSTSIALVYLTDIIKF) threads the bilayer. At 310–337 (GYGIEEFLCPEPGRSAVQNDAACGITGA) the chain is on the extracellular side. Residues 338-358 (MFHFGITYCCCWAMTMSIVLF) form a helical membrane-spanning segment. Residues 359–365 (CSVKRIK) are Cytoplasmic-facing. Residues 366–386 (LFYFRHFMIGNTIFTIITTVI) traverse the membrane as a helical segment. Residues 387–408 (LLSAKKMVAGTGYIECWVRERW) lie on the Extracellular side of the membrane. The chain crosses the membrane as a helical span at residues 409–429 (FVITLFWLPCGIGLSIGIFCI). Residues 430–457 (GGVIHEIYNISKKVNIRESEFILRQIKP) are Cytoplasmic-facing. The chain crosses the membrane as a helical span at residues 458 to 478 (FSLVFSVAGSFLYLFIFFFDV). Over 479-511 (ERKIDSYKAAVADYVLCLLSGGSEETCFTTGPN) the chain is Extracellular. A helical transmembrane segment spans residues 512-532 (YASFFIFYFFIRVFGVLFFSI). Residues 533-609 (YGTSRVARDI…DSKSIELEKK (77 aa)) are Cytoplasmic-facing. The span at 559–570 (ESGISRNNSRTD) shows a compositional bias: polar residues. A disordered region spans residues 559–609 (ESGISRNNSRTDISFGKNNNSKNSNNSKNSNNSKNSNNSDNDSKSIELEKK). Over residues 575–598 (KNNNSKNSNNSKNSNNSKNSNNSD) the composition is skewed to low complexity. Positions 599 to 609 (NDSKSIELEKK) are enriched in basic and acidic residues.

This sequence belongs to the G-protein coupled receptor Fz/Smo family.

Its subcellular location is the membrane. The polypeptide is Frizzled and smoothened-like protein E (fslE) (Dictyostelium discoideum (Social amoeba)).